The sequence spans 362 residues: DNA polymerase IV (362 aa).

Residues 6-187 (IIHVDMDAFY…LPVSSFHGVG (182 aa)) enclose the UmuC domain. Residues Asp10 and Asp105 each contribute to the Mg(2+) site. Glu106 is a catalytic residue.

The protein belongs to the DNA polymerase type-Y family. In terms of assembly, monomer. Requires Mg(2+) as cofactor.

The protein resides in the cytoplasm. The catalysed reaction is DNA(n) + a 2'-deoxyribonucleoside 5'-triphosphate = DNA(n+1) + diphosphate. Poorly processive, error-prone DNA polymerase involved in untargeted mutagenesis. Copies undamaged DNA at stalled replication forks, which arise in vivo from mismatched or misaligned primer ends. These misaligned primers can be extended by PolIV. Exhibits no 3'-5' exonuclease (proofreading) activity. May be involved in translesional synthesis, in conjunction with the beta clamp from PolIII. The sequence is that of DNA polymerase IV from Leptospira interrogans serogroup Icterohaemorrhagiae serovar Lai (strain 56601).